The following is a 187-amino-acid chain: Large ribosomal subunit protein uL22 (187 aa).

The disordered stretch occupies residues 161-187 (APTDDAPAKKKLSKKKLARQKEKMMRE). The span at 169–178 (KKKLSKKKLA) shows a compositional bias: basic residues.

The protein belongs to the universal ribosomal protein uL22 family.

The sequence is that of Large ribosomal subunit protein uL22 (RpL17) from Bombyx mori (Silk moth).